Reading from the N-terminus, the 470-residue chain is tRNA modification GTPase MnmE (470 aa).

(6S)-5-formyl-5,6,7,8-tetrahydrofolate-binding residues include K27, E90, and R129. Residues 231–391 (GVSLVLAGKP…LRDFLNQRFL (161 aa)) form the TrmE-type G domain. Residues 241–246 (NVGKSS), 260–266 (TPFPGTT), and 285–288 (DTAG) contribute to the GTP site. 2 residues coordinate Mg(2+): S245 and T266. K470 is a (6S)-5-formyl-5,6,7,8-tetrahydrofolate binding site.

This sequence belongs to the TRAFAC class TrmE-Era-EngA-EngB-Septin-like GTPase superfamily. TrmE GTPase family. As to quaternary structure, homodimer. Heterotetramer of two MnmE and two MnmG subunits. Requires K(+) as cofactor.

The protein resides in the cytoplasm. Its function is as follows. Exhibits a very high intrinsic GTPase hydrolysis rate. Involved in the addition of a carboxymethylaminomethyl (cmnm) group at the wobble position (U34) of certain tRNAs, forming tRNA-cmnm(5)s(2)U34. The polypeptide is tRNA modification GTPase MnmE (Syntrophobacter fumaroxidans (strain DSM 10017 / MPOB)).